Here is a 424-residue protein sequence, read N- to C-terminus: uncharacterized protein (424 aa).

11 helical membrane-spanning segments follow: residues 9-29, 41-61, 86-106, 119-139, 148-168, 184-204, 222-242, 270-290, 320-340, 345-365, and 377-397; these read ITWI…GILI, ASLF…GTLA, GAIL…IIAL, ADWQ…LLHM, ISTL…AVSL, WSAA…WEMI, LFLA…VTVG, VTVC…IAGF, VLTA…LFQI, LLKG…AAAL, and MALG…WALL.

This sequence belongs to the amino acid-polyamine-organocation (APC) superfamily.

The protein resides in the cell membrane. This is an uncharacterized protein from Bacillus subtilis (strain 168).